The following is a 319-amino-acid chain: MEPILAPNPNRFVIFPIQYHDIWNMYKKAEASFWTVEEVDISKDINDWNKVTPDEKYFIKHVLAFFAASDGIVNENLAERFCTEVQITEARCFYGFRMAIENIHSEMYSLLIDTYVKDSNEKNYLFNAIETMPCVKKKADWAQKWIHDSAGYGERLIAFAAVEGIFFSGSFASIFWLKKRGLMPGLTFSNELISRDEGLHCDFACLMFKHLLHPPSEETVRSIITDAVSIEQEFLTAALPVKLIGMNCEMMKTYIEFVADRLISELGFKKIYNVTNPFDFMENISLEGKTNFFEKRVGEYQKMGVMSQKDNHFSLDVDF.

Positions 70, 101, and 104 each coordinate Fe cation. Y108 is an active-site residue. Positions 163, 197, and 200 each coordinate Fe cation. The interaction with R1 stretch occupies residues 313-319 (FSLDVDF).

The protein belongs to the ribonucleoside diphosphate reductase small chain family. Interacts with RNR1/OPG080 subunit. Can interact with host RNR1 supunit. The cofactor is Fe cation.

It carries out the reaction a 2'-deoxyribonucleoside 5'-diphosphate + [thioredoxin]-disulfide + H2O = a ribonucleoside 5'-diphosphate + [thioredoxin]-dithiol. In terms of biological role, ribonucleoside-diphosphate reductase holoenzyme provides the precursors necessary for viral DNA synthesis. Allows virus growth in non-dividing cells. Catalyzes the biosynthesis of deoxyribonucleotides from the corresponding ribonucleotides. In Vaccinia virus (strain L-IVP) (VACV), this protein is Ribonucleoside-diphosphate reductase small chain (OPG048).